Here is a 197-residue protein sequence, read N- to C-terminus: Dephospho-CoA kinase (197 aa).

In terms of domain architecture, DPCK spans 2–197 (IIGLTGGIAS…GAIKDLANLV (196 aa)). Residue 10–15 (ASGKST) participates in ATP binding.

This sequence belongs to the CoaE family.

The protein localises to the cytoplasm. It catalyses the reaction 3'-dephospho-CoA + ATP = ADP + CoA + H(+). The protein operates within cofactor biosynthesis; coenzyme A biosynthesis; CoA from (R)-pantothenate: step 5/5. Functionally, catalyzes the phosphorylation of the 3'-hydroxyl group of dephosphocoenzyme A to form coenzyme A. The sequence is that of Dephospho-CoA kinase from Streptococcus thermophilus (strain ATCC BAA-250 / LMG 18311).